Reading from the N-terminus, the 70-residue chain is Protein FlmC (70 aa).

In terms of biological role, component of a type I toxin-antitoxin (TA) system. Either this protein or sequences upstream of it are required for translation of downstream flmA; this could be translationally coupled to flmA. The polypeptide is Protein FlmC (flmC) (Escherichia coli (strain K12)).